Consider the following 330-residue polypeptide: Phosphate acyltransferase (330 aa).

Belongs to the PlsX family. In terms of assembly, homodimer. Probably interacts with PlsY.

It localises to the cytoplasm. The catalysed reaction is a fatty acyl-[ACP] + phosphate = an acyl phosphate + holo-[ACP]. It functions in the pathway lipid metabolism; phospholipid metabolism. Functionally, catalyzes the reversible formation of acyl-phosphate (acyl-PO(4)) from acyl-[acyl-carrier-protein] (acyl-ACP). This enzyme utilizes acyl-ACP as fatty acyl donor, but not acyl-CoA. The chain is Phosphate acyltransferase from Bacillus licheniformis (strain ATCC 14580 / DSM 13 / JCM 2505 / CCUG 7422 / NBRC 12200 / NCIMB 9375 / NCTC 10341 / NRRL NRS-1264 / Gibson 46).